The chain runs to 261 residues: Thioesterase TesA (261 aa).

Catalysis depends on residues S104, D208, and H236.

Belongs to the thioesterase family.

The catalysed reaction is a fatty acyl-CoA + H2O = a fatty acid + CoA + H(+). In terms of biological role, involved in the synthesis of both phthiocerol dimycocerosates (PDIMs) and phenolic glycolipids (PGLs), which are structurally related lipids non-covalently bound to the outer cell wall layer of M.tuberculosis and are important virulence factors. This Mycobacterium leprae (strain TN) protein is Thioesterase TesA (tesA).